Reading from the N-terminus, the 144-residue chain is D-aminoacyl-tRNA deacylase (144 aa).

The Gly-cisPro motif, important for rejection of L-amino acids signature appears at Gly-136–Pro-137.

Belongs to the DTD family. As to quaternary structure, homodimer.

It localises to the cytoplasm. The catalysed reaction is glycyl-tRNA(Ala) + H2O = tRNA(Ala) + glycine + H(+). It carries out the reaction a D-aminoacyl-tRNA + H2O = a tRNA + a D-alpha-amino acid + H(+). Functionally, an aminoacyl-tRNA editing enzyme that deacylates mischarged D-aminoacyl-tRNAs. Also deacylates mischarged glycyl-tRNA(Ala), protecting cells against glycine mischarging by AlaRS. Acts via tRNA-based rather than protein-based catalysis; rejects L-amino acids rather than detecting D-amino acids in the active site. By recycling D-aminoacyl-tRNA to D-amino acids and free tRNA molecules, this enzyme counteracts the toxicity associated with the formation of D-aminoacyl-tRNA entities in vivo and helps enforce protein L-homochirality. This Glaesserella parasuis serovar 5 (strain SH0165) (Haemophilus parasuis) protein is D-aminoacyl-tRNA deacylase.